The chain runs to 118 residues: Diacylglycerol kinase (118 aa).

Glu28 is a binding site for a divalent metal cation. A run of 2 helical transmembrane segments spans residues 29-49 and 55-75; these read TAFRHECFLACILIPLTFFLG and IILMISSVLLVMALELLNSAV. Glu69 functions as the Proton acceptor in the catalytic mechanism. An a divalent metal cation-binding site is contributed by Glu76. The helical transmembrane segment at 98–118 threads the bilayer; it reads SASVFIALCIVGIVWGGILFF.

The protein belongs to the bacterial diacylglycerol kinase family. It depends on Mg(2+) as a cofactor.

Its subcellular location is the cell inner membrane. The enzyme catalyses a 1,2-diacyl-sn-glycerol + ATP = a 1,2-diacyl-sn-glycero-3-phosphate + ADP + H(+). Catalyzes the ATP-dependent phosphorylation of sn-l,2-diacylglycerol (DAG) to phosphatidic acid. Involved in the recycling of diacylglycerol produced as a by-product during membrane-derived oligosaccharide (MDO) biosynthesis. The polypeptide is Diacylglycerol kinase (dgkA) (Haemophilus influenzae (strain ATCC 51907 / DSM 11121 / KW20 / Rd)).